Consider the following 539-residue polypeptide: MALFQAMSMVAQLGYYEKVAGVLGFLSIALLFWKLNHKPFYPALPLAGEPPQRRWFSLSNRLRYYNDCAALFDEAYHTAYAKKGKAVLVPSMGVHTAMIMPESAMNWAMSQPDDSLSIKKAFSELNQTKYSLGHGRYWEDPWQLDLVKAHLSSILQNLIPQLNEELAAAFSKHLGTDAENWKEIELEVIMRRIIAQATSRFIVGLPLCRDDGYLDLSYKVILGMVTTIWATLPFPDLIRAITGPIASWQTRRNIARIQEYLEPLYQERISILESRDGPESDPEPQDLFMMMLRFAQKKRPDEYANLGIMTRRVCAANFVAMHQSTVSVTNLILNIIGSDAEFNTTATLRDEITQVMRGTDAKSWTKDTFTRMRKCDSVAREAMRLNFPLGTRGSMRAVLKDGLESPEGIKLQKGTTISWLASCAQVDADRFDNPQKFDPFRFSRASKDDDDDGKSTSSHAKDAFVTTSPQYLPFGHGKHACPGRFMVDLMFKILLAQLLTHYDLGWPEDYQGKQPPSVWQGELSEPPPGARILVKRRKV.

The helical transmembrane segment at 13-33 (LGYYEKVAGVLGFLSIALLFW) threads the bilayer. The disordered stretch occupies residues 439 to 460 (PFRFSRASKDDDDDGKSTSSHA). Residue Cys481 participates in heme binding.

The protein belongs to the cytochrome P450 family. Heme serves as cofactor.

It localises to the membrane. Its pathway is secondary metabolite biosynthesis. Its function is as follows. Cytochrome P450 monooxygenase; part of the gene cluster that mediates the biosynthesis of tenellin-type 2-pyridones, iron-chelating compounds involved in iron stress tolerance, competition with the natural competitor fungus Metarhizium robertsii and insect hosts infection. TenB catalyzes the selective N-hydroxylation of the 2-pyridone nitrogen of yield tellinin and 15-hydroxytellenin (15-HT), respectively. The pathway begins with the assembly of the polyketide-amino acid backbone by the hybrid PKS-NRPS tenS with the help of the enoyl reductase tenC. These enzymes catalyze the synthesis of the pyrrolidine-2-dione intermediates pretellinin A, 11-hydropretellenin A, 12-hydropretellenin A, 13-hydropretellenin A, 14-hydropretellenin A, 12-oxopretellenin A and prototellinin D. The cytochrome P450 monooxygenase tenA then catalyzes an oxidative ring expansion of pretenellin A and 14-hydropretellenin A to form the 2-pyridone core, leading to pretenellin B and pyridovericin, respectively. The cytochrome P450 monooxygenase tenB is then required for the selective N-hydroxylation of the 2-pyridone nitrogen of yield tellinin and 15-hydroxytellenin (15-HT), respectively. The UDP-glucosyltransferase GT1 and the methyltransferase MT1, located outside the tenS gene cluster, contribute to the stepwise glycosylation and methylation of 15-HT to obtain the glycoside pyridovericin-N-O-(4-O-methyl-beta-D-glucopyranoside) (PMGP). Additional related compounds such as 1-O-methyl-15-HT, (8Z)-1-O-methyl-15-HT, and O-methyltenellin A are also produced but the enzymes involved in their biosynthesis have still to be determined. In Beauveria bassiana (White muscardine disease fungus), this protein is Cytochrome P450 monooxygenase tenB.